Reading from the N-terminus, the 180-residue chain is Crossover junction endodeoxyribonuclease RuvC (180 aa).

Residues Asp7, Glu66, and Asp138 contribute to the active site. 3 residues coordinate Mg(2+): Asp7, Glu66, and Asp138.

This sequence belongs to the RuvC family. Homodimer which binds Holliday junction (HJ) DNA. The HJ becomes 2-fold symmetrical on binding to RuvC with unstacked arms; it has a different conformation from HJ DNA in complex with RuvA. In the full resolvosome a probable DNA-RuvA(4)-RuvB(12)-RuvC(2) complex forms which resolves the HJ. It depends on Mg(2+) as a cofactor.

It localises to the cytoplasm. The enzyme catalyses Endonucleolytic cleavage at a junction such as a reciprocal single-stranded crossover between two homologous DNA duplexes (Holliday junction).. The RuvA-RuvB-RuvC complex processes Holliday junction (HJ) DNA during genetic recombination and DNA repair. Endonuclease that resolves HJ intermediates. Cleaves cruciform DNA by making single-stranded nicks across the HJ at symmetrical positions within the homologous arms, yielding a 5'-phosphate and a 3'-hydroxyl group; requires a central core of homology in the junction. The consensus cleavage sequence is 5'-(A/T)TT(C/G)-3'. Cleavage occurs on the 3'-side of the TT dinucleotide at the point of strand exchange. HJ branch migration catalyzed by RuvA-RuvB allows RuvC to scan DNA until it finds its consensus sequence, where it cleaves and resolves the cruciform DNA. This Burkholderia pseudomallei (strain 1710b) protein is Crossover junction endodeoxyribonuclease RuvC.